The following is a 2079-amino-acid chain: Protein xmas (2079 aa).

One can recognise an RRM domain in the interval 12 to 83; that stretch reads KTLLCRNIPE…HLFDISYADN (72 aa). Residues 112 to 152 form a disordered region; sequence NEYGSGKPIKKPQNGSSGSGGSSMLPAIPVGPATAPVSRDR. A PCI domain is found at 342–525; that stretch reads DSKINAENLT…ETEYKLPRQY (184 aa). A sufficient for Orc3 binding region spans residues 835–1359; sequence PLSFGAENPE…RRDASDHKHA (525 aa). 4 disordered regions span residues 1335 to 1360, 1755 to 1778, 1930 to 1963, and 2032 to 2079; these read RHTLRELNRSHKSRKRRDASDHKHAM, AEETEDQDTHHRHHGGGQKMSKRA, KAQAKPRSEPKSPSSATDYHRVASQKLPHVTSKA, and SAAA…TGKL. Over residues 1764-1776 the composition is skewed to basic residues; it reads HHRHHGGGQKMSK. Low complexity predominate over residues 2048 to 2059; it reads PVVSPKVQVPSV. Residues 2070-2079 show a composition bias toward polar residues; the sequence is GPQTTKTGKL.

It belongs to the SAC3 family. As to quaternary structure, component of the nuclear pore complex (NPC)-associated TREX-2/AMEX complex (anchoring and mRNA export complex), composed of e(y)2, xmas and PCID2. Within the TREX-2/ AMEX complex, interactions with e(y)2 is required for localization of e(y)2 to the nuclear periphery. Interaction between the TREX-2/AMEX complex and the ORC complex is required for ORC localization to mRNPs, and consequently mRNA export. Within the TREX-2/AMEX-ORC complex, interacts with Orc6, (via C-terminus) with Orc3, and weakly interacts with Orc4. However, another report found that the interaction with Orc3 is not direct, instead it is mediated via e(y)2. Interacts with piwi. As to expression, expressed in ovaries (at protein level). In terms of tissue distribution, detected in the testes and ovaries, with expression levels higher in oocytes than in testicular cells (at protein level). Detected in the testes and ovaries (at protein level). As to expression, detected in the testes.

It localises to the nucleus. Its subcellular location is the nucleoplasm. The protein resides in the nucleus membrane. It is found in the cytoplasm. Involved in mRNA export and mRNA coupled transcription activation. Component of the nuclear pore complex (NPC)-associated TREX-2/AMEX complex (anchoring and mRNA export complex) which functions in docking export-competent ribonucleoprotein particles (mRNPs) to the nuclear entrance of the nuclear pore complex (nuclear basket), thereby enabling the export of mRNAs to the cytoplasm through the nuclear pores. The TREX-2/AMEX complex also functions with the transcriptional coactivator SAGA/TFTC complex, to anchor a subset of transcription sites to the nuclear pore complex basket in order to achieve efficient transcription and export of their resulting mRNAs. Within the complex, required for localization of e(y)2 to the nuclear periphery. In Drosophila melanogaster (Fruit fly), this protein is Protein xmas.